The primary structure comprises 186 residues: Protein GrpE (186 aa).

Composition is skewed to basic and acidic residues over residues 1-13 and 23-34; these read MSDNKTELNEEQH and EETHQAEDAVEH. Residues 1-34 are disordered; the sequence is MSDNKTELNEEQHNATAEGEVSEETHQAEDAVEH.

Belongs to the GrpE family. As to quaternary structure, homodimer.

Its subcellular location is the cytoplasm. Its function is as follows. Participates actively in the response to hyperosmotic and heat shock by preventing the aggregation of stress-denatured proteins, in association with DnaK and GrpE. It is the nucleotide exchange factor for DnaK and may function as a thermosensor. Unfolded proteins bind initially to DnaJ; upon interaction with the DnaJ-bound protein, DnaK hydrolyzes its bound ATP, resulting in the formation of a stable complex. GrpE releases ADP from DnaK; ATP binding to DnaK triggers the release of the substrate protein, thus completing the reaction cycle. Several rounds of ATP-dependent interactions between DnaJ, DnaK and GrpE are required for fully efficient folding. This Hydrogenovibrio crunogenus (strain DSM 25203 / XCL-2) (Thiomicrospira crunogena) protein is Protein GrpE.